The chain runs to 64 residues: DNA gyrase inhibitor YacG (64 aa).

Positions 7, 10, 26, and 30 each coordinate Zn(2+). Residues lysine 43–glutamine 64 are disordered.

It belongs to the DNA gyrase inhibitor YacG family. As to quaternary structure, interacts with GyrB. Zn(2+) serves as cofactor.

Functionally, inhibits all the catalytic activities of DNA gyrase by preventing its interaction with DNA. Acts by binding directly to the C-terminal domain of GyrB, which probably disrupts DNA binding by the gyrase. In Aeromonas salmonicida (strain A449), this protein is DNA gyrase inhibitor YacG.